A 634-amino-acid chain; its full sequence is Sodium-dependent multivitamin transporter (634 aa).

The next 12 membrane-spanning stretches (helical) occupy residues 23–43, 65–85, 100–120, 142–162, 175–195, 207–227, 255–275, 295–315, 350–370, 403–423, 427–447, and 455–475; these read FSVVDYVVFGLLLVLSLVIGL, MGCLPVALSLLATFQSAVAIL, FLGCSYFLGLLIPAHIFIPVF, ICGTVTFIFQMVVYMGVALYA, LWLSVLALGIVCNIYTALGGL, LIMFLGQLVVIIVGAAKVGGL, FWTLAFGGVFMMLSLYGVNQA, AVFPCQQVALCMSCLIGLVMF, LPGLFVACLFSGSLSTISSAF, FAYGLVCLGMAYVSSHLGSVL, LSIFGMVGGPLLGLFCLGMFF, and AIVGLLTGLTMAFWIGIGSIV. 2 N-linked (GlcNAc...) asparagine glycosylation sites follow: asparagine 488 and asparagine 497. The helical transmembrane segment at 526 to 546 threads the bilayer; sequence LWYSAHNSTTVIAVGLIVSLL.

This sequence belongs to the sodium:solute symporter (SSF) (TC 2.A.21) family. Interacts with PDZD11. As to expression, expressed in the jejunum (at protein level). Expressed in lung, skeletal muscle, heart, brain, kidney, intestine, liver, and placenta.

It is found in the cell membrane. It localises to the apical cell membrane. The enzyme catalyses biotin(out) + 2 Na(+)(out) = biotin(in) + 2 Na(+)(in). It catalyses the reaction (R)-pantothenate(out) + 2 Na(+)(out) = (R)-pantothenate(in) + 2 Na(+)(in). It carries out the reaction (R)-lipoate(out) + 2 Na(+)(out) = (R)-lipoate(in) + 2 Na(+)(in). The catalysed reaction is iodide(out) + 2 Na(+)(out) = iodide(in) + 2 Na(+)(in). Its function is as follows. Sodium-dependent multivitamin transporter that mediates the electrogenic transport of pantothenate, biotin, lipoate and iodide. Functions as a Na(+)-coupled substrate symporter where the stoichiometry of Na(+):substrate is 2:1, creating an electrochemical Na(+) gradient used as driving force for substrate uptake. Required for biotin and pantothenate uptake in the intestine across the brush border membrane. Plays a role in the maintenance of intestinal mucosa integrity, by providing the gut mucosa with biotin. Contributes to the luminal uptake of biotin and pantothenate into the brain across the blood-brain barrier. This chain is Sodium-dependent multivitamin transporter, found in Rattus norvegicus (Rat).